A 645-amino-acid polypeptide reads, in one-letter code: Aspartate--tRNA ligase, mitochondrial (645 aa).

The N-terminal 47 residues, 1-47 (MYFPSWLSQLYRGLSRPIRRTTQPIWGSLYRSLLQSSQRRIPEFSSF), are a transit peptide targeting the mitochondrion. At T219 the chain carries Phosphothreonine. Residue S242 is modified to Phosphoserine. The interval 244-247 (QQFK) is aspartate. R266 is a binding site for L-aspartate. 266–268 (RDE) is an ATP binding site. Position 382 is an N6-acetyllysine (K382). E535 serves as a coordination point for ATP. R542 is a binding site for L-aspartate. 584 to 587 (GLDR) contacts ATP.

Belongs to the class-II aminoacyl-tRNA synthetase family. Type 1 subfamily. In terms of assembly, homodimer.

It is found in the mitochondrion matrix. Its subcellular location is the mitochondrion membrane. It catalyses the reaction tRNA(Asp) + L-aspartate + ATP = L-aspartyl-tRNA(Asp) + AMP + diphosphate. Its function is as follows. Catalyzes the attachment of aspartate to tRNA(Asp) in a two-step reaction: aspartate is first activated by ATP to form Asp-AMP and then transferred to the acceptor end of tRNA(Asp). The sequence is that of Aspartate--tRNA ligase, mitochondrial (DARS2) from Homo sapiens (Human).